We begin with the raw amino-acid sequence, 337 residues long: Protein-arginine kinase (337 aa).

The Phosphagen kinase C-terminal domain maps to 8–239 (VVLSSRIRLA…KQIISSERRA (232 aa)). ATP is bound by residues 11 to 15 (SSRIR), His-76, Arg-110, 161 to 165 (RASVM), and 192 to 197 (RGIYGE). The short motif at 321–326 (RDVKRA) is the RDXXRA motif of the pArg binding pocket involved in allosteric regulation element.

It belongs to the ATP:guanido phosphotransferase family.

It carries out the reaction L-arginyl-[protein] + ATP = N(omega)-phospho-L-arginyl-[protein] + ADP + H(+). With respect to regulation, appears to be allosterically activated by the binding of pArg-containing polypeptides to the pArg-binding pocket localized in the C-terminal domain of McsB. Its function is as follows. Catalyzes the specific phosphorylation of arginine residues in proteins. This chain is Protein-arginine kinase, found in Caldanaerobacter subterraneus subsp. tengcongensis (strain DSM 15242 / JCM 11007 / NBRC 100824 / MB4) (Thermoanaerobacter tengcongensis).